Consider the following 431-residue polypeptide: Protein prenyltransferase alpha subunit repeat-containing protein 1-B (431 aa).

5 PFTA repeats span residues 85-118 (ELIDVTCTLLLLNPDFTTAWNVRKELIQSGTLNP), 120-153 (KDLQLGKLALTKFPKSPETWIHRRWVLQRVVQEL), 178-211 (EEMHVCYEAAGRYPSNYNSWSHRIWVIQHLGNLN), 217-250 (DELSSTKHWVSMHVSDHSGFHYRQFLLKSLLCKT), and 293-326 (EEMKLNRELLDSYPGHETLWCHRRQIFKLIHQLL). Residues 363–383 (PMDVDGMSDPNKQGYTQETKR) form a disordered region. One copy of the PFTA 6 repeat lies at 394–431 (SLDSELRFINCVLTNCCSPEQSRFAASYRKWLLSLQGY).

The protein belongs to the protein prenyltransferase subunit alpha family.

The protein is Protein prenyltransferase alpha subunit repeat-containing protein 1-B (ptar1-b) of Xenopus laevis (African clawed frog).